A 399-amino-acid polypeptide reads, in one-letter code: Elongation factor Tu (399 aa).

Positions 10–204 constitute a tr-type G domain; sequence KPHVNIGTIG…AVDASIPEPE (195 aa). The tract at residues 19 to 26 is G1; it reads GHVDHGKT. 19–26 is a GTP binding site; sequence GHVDHGKT. Thr-26 is a Mg(2+) binding site. A G2 region spans residues 60 to 64; it reads GITIN. A G3 region spans residues 81-84; sequence DCPG. Residues 81–85 and 136–139 each bind GTP; these read DCPGH and NKCD. The interval 136 to 139 is G4; sequence NKCD. Residues 174-176 form a G5 region; sequence SGL.

It belongs to the TRAFAC class translation factor GTPase superfamily. Classic translation factor GTPase family. EF-Tu/EF-1A subfamily. Monomer.

The protein localises to the cytoplasm. The enzyme catalyses GTP + H2O = GDP + phosphate + H(+). Functionally, GTP hydrolase that promotes the GTP-dependent binding of aminoacyl-tRNA to the A-site of ribosomes during protein biosynthesis. The protein is Elongation factor Tu of Synechococcus sp. (strain CC9902).